The chain runs to 348 residues: Tetraacyldisaccharide 4'-kinase (348 aa).

Residue 65 to 72 (VAGGAGKT) participates in ATP binding. The tract at residues 89–117 (PGIVSRGHGSREREARPVSADSTAQSVGD) is disordered.

The protein belongs to the LpxK family.

It catalyses the reaction a lipid A disaccharide + ATP = a lipid IVA + ADP + H(+). It functions in the pathway glycolipid biosynthesis; lipid IV(A) biosynthesis; lipid IV(A) from (3R)-3-hydroxytetradecanoyl-[acyl-carrier-protein] and UDP-N-acetyl-alpha-D-glucosamine: step 6/6. Functionally, transfers the gamma-phosphate of ATP to the 4'-position of a tetraacyldisaccharide 1-phosphate intermediate (termed DS-1-P) to form tetraacyldisaccharide 1,4'-bis-phosphate (lipid IVA). In Leptothrix cholodnii (strain ATCC 51168 / LMG 8142 / SP-6) (Leptothrix discophora (strain SP-6)), this protein is Tetraacyldisaccharide 4'-kinase.